Consider the following 189-residue polypeptide: Proline-rich protein 29 (189 aa).

The segment at 152-189 is disordered; sequence SREREVRAVPPPPPPSATGTVGADVPPASDYYDAESLL.

The protein is Proline-rich protein 29 (PRR29) of Homo sapiens (Human).